The following is a 294-amino-acid chain: Shikimate dehydrogenase (NADP(+)) (294 aa).

Residues 14-16 (SKS) and Thr61 each bind shikimate. The active-site Proton acceptor is the Lys65. An NADP(+)-binding site is contributed by Asp77. Shikimate is bound by residues Asn86 and Asp102. NADP(+) is bound by residues 140 to 144 (GSGGA) and Leu235. Tyr237 lines the shikimate pocket. Gly259 lines the NADP(+) pocket.

This sequence belongs to the shikimate dehydrogenase family. In terms of assembly, homodimer.

It catalyses the reaction shikimate + NADP(+) = 3-dehydroshikimate + NADPH + H(+). The protein operates within metabolic intermediate biosynthesis; chorismate biosynthesis; chorismate from D-erythrose 4-phosphate and phosphoenolpyruvate: step 4/7. In terms of biological role, involved in the biosynthesis of the chorismate, which leads to the biosynthesis of aromatic amino acids. Catalyzes the reversible NADPH linked reduction of 3-dehydroshikimate (DHSA) to yield shikimate (SA). The sequence is that of Shikimate dehydrogenase (NADP(+)) from Blochmanniella floridana.